A 397-amino-acid polypeptide reads, in one-letter code: CCA-adding enzyme (397 aa).

ATP is bound by residues glycine 26 and arginine 29. Glycine 26 and arginine 29 together coordinate CTP. Residues aspartate 39 and aspartate 41 each coordinate Mg(2+). 5 residues coordinate ATP: arginine 110, aspartate 153, arginine 156, arginine 159, and arginine 162. The CTP site is built by arginine 110, aspartate 153, arginine 156, arginine 159, and arginine 162.

Belongs to the tRNA nucleotidyltransferase/poly(A) polymerase family. Bacterial CCA-adding enzyme type 3 subfamily. Homodimer. The cofactor is Mg(2+).

It carries out the reaction a tRNA precursor + 2 CTP + ATP = a tRNA with a 3' CCA end + 3 diphosphate. It catalyses the reaction a tRNA with a 3' CCA end + 2 CTP + ATP = a tRNA with a 3' CCACCA end + 3 diphosphate. Functionally, catalyzes the addition and repair of the essential 3'-terminal CCA sequence in tRNAs without using a nucleic acid template. Adds these three nucleotides in the order of C, C, and A to the tRNA nucleotide-73, using CTP and ATP as substrates and producing inorganic pyrophosphate. tRNA 3'-terminal CCA addition is required both for tRNA processing and repair. Also involved in tRNA surveillance by mediating tandem CCA addition to generate a CCACCA at the 3' terminus of unstable tRNAs. While stable tRNAs receive only 3'-terminal CCA, unstable tRNAs are marked with CCACCA and rapidly degraded. The chain is CCA-adding enzyme from Bacillus cereus (strain ATCC 10987 / NRS 248).